A 358-amino-acid chain; its full sequence is MSTGQSEDHLPISAAEAERLFAPFADSGVLTLAVSGGPDSMALMWLAARWRATRAGGPRLLAVTVDHGLRPESRREALMVKQLARQLGLTHRTLRWSGEKPAAGIPEAARIARYRLLARAAEQAGASHVVTAHTRDDQAETVLMRLLRGSGIAGLAAMAPVSRRDGLLLARPLLSLSKARLLATLRSAGIAFADDPTNRDPAFTRPRLRALMPTLAAEGADPRTLATLANRARRANAAIELMADGAERYLALLAAGRSSKRRGGEGEMFDPRAFAALPAEIRLRLLMRAIDRVGTEGPVELGKAEALLERLDRTLAGITDGGTAERGTLKQTLAGALVSLAKDAIRISPAPPRRRRGE.

35 to 40 (SGGPDS) lines the ATP pocket.

It belongs to the tRNA(Ile)-lysidine synthase family.

The protein resides in the cytoplasm. The enzyme catalyses cytidine(34) in tRNA(Ile2) + L-lysine + ATP = lysidine(34) in tRNA(Ile2) + AMP + diphosphate + H(+). Functionally, ligates lysine onto the cytidine present at position 34 of the AUA codon-specific tRNA(Ile) that contains the anticodon CAU, in an ATP-dependent manner. Cytidine is converted to lysidine, thus changing the amino acid specificity of the tRNA from methionine to isoleucine. In Bradyrhizobium sp. (strain BTAi1 / ATCC BAA-1182), this protein is tRNA(Ile)-lysidine synthase.